The sequence spans 1273 residues: Chitin synthase 7 (1273 aa).

A disordered region spans residues 1–69 (MPAVERNAPF…LINPSSGGPG (69 aa)). At 1–79 (MPAVERNAPF…FSAASRSKHR (79 aa)) the chain is on the cytoplasmic side. A helical transmembrane segment spans residues 80–100 (FSWWTAFSLFVTFWAPSPLLS). Over 101–117 (SCCGLKDKQSRQAWREK) the chain is Extracellular. The chain crosses the membrane as a helical span at residues 118 to 138 (VSLVFIAILLGGFIGFITMGL). At 139-360 (NAALCPSASS…FISNLVLYCS (222 aa)) the chain is on the cytoplasmic side. The chain crosses the membrane as a helical span at residues 361–381 (LVVILAIVLIRFFMAVWFAWF). At 382-820 (MAGRMSSPPR…LCGTFCFSMQ (439 aa)) the chain is on the extracellular side. An N-linked (GlcNAc...) asparagine glycan is attached at Asn412. The segment at 416–451 (AAPWANKQRPPPSQPARRRRDSAQSATPSVPDSLSV) is disordered. Asn667 and Asn796 each carry an N-linked (GlcNAc...) asparagine glycan. The chain crosses the membrane as a helical span at residues 821–841 (FVVFMDLLGTAVLPISIALTY). Topologically, residues 842 to 857 (TLVVTYCLNPPHSFTE) are cytoplasmic. A helical membrane pass occupies residues 858 to 878 (AIPLMLLVAVIGMPALLILLA). The Extracellular segment spans residues 879–881 (TRK). A helical transmembrane segment spans residues 882 to 902 (VVYVLWMLIYLLALPVWNFVL). Residues 903-1273 (PVYSFWHFDD…RGRSYHDRFS (371 aa)) are Cytoplasmic-facing. 2 disordered regions span residues 966–1009 (RELE…SVTV) and 1126–1273 (NGGG…DRFS). A compositionally biased stretch (low complexity) spans 1000–1009 (SDSFSDSVTV). Positions 1215 to 1232 (QHPPQPSQPPQPPQPAQP) are enriched in pro residues. The segment covering 1233-1246 (TRPGGAPAAPPRGA) has biased composition (low complexity).

It belongs to the chitin synthase family. Class IV subfamily.

It localises to the cell membrane. It is found in the cytoplasmic vesicle membrane. It carries out the reaction [(1-&gt;4)-N-acetyl-beta-D-glucosaminyl](n) + UDP-N-acetyl-alpha-D-glucosamine = [(1-&gt;4)-N-acetyl-beta-D-glucosaminyl](n+1) + UDP + H(+). Polymerizes chitin, a structural polymer of the cell wall and septum, by transferring the sugar moiety of UDP-GlcNAc to the non-reducing end of the growing chitin polymer. This chain is Chitin synthase 7, found in Mycosarcoma maydis (Corn smut fungus).